The following is a 303-amino-acid chain: Acetylglutamate kinase (303 aa).

Substrate is bound by residues 75 to 76 (GG), R97, and N194.

This sequence belongs to the acetylglutamate kinase family. ArgB subfamily.

Its subcellular location is the cytoplasm. It carries out the reaction N-acetyl-L-glutamate + ATP = N-acetyl-L-glutamyl 5-phosphate + ADP. It participates in amino-acid biosynthesis; L-arginine biosynthesis; N(2)-acetyl-L-ornithine from L-glutamate: step 2/4. Functionally, catalyzes the ATP-dependent phosphorylation of N-acetyl-L-glutamate. The protein is Acetylglutamate kinase of Gloeobacter violaceus (strain ATCC 29082 / PCC 7421).